Reading from the N-terminus, the 119-residue chain is Protein FAM24A-like (119 aa).

The first 40 residues, 1–40 (MYKPFDLRTIITIIIGCGILTAMFLLIGLVLCLYSKISKA), serve as a signal peptide directing secretion.

Belongs to the FAM24 family.

It is found in the secreted. The protein is Protein FAM24A-like of Mus musculus (Mouse).